The chain runs to 378 residues: MSKKDYYEVLGLQKGASEQEIKRAYKRLAAKHHPDKNQGSKEAEEKFKEIKEAYEVLGDNEKRAMYDQYGHQAFEHGGGAGGFGGFGGGGFGGFEDIFSEMFGGGFGGGARRQRVVRGDDLRYDLEITLEEAVRGVKKDIRIRTLVQCDTCHGSGAEAGSKVETCPHCHGSGRVRRQQGFFMTETVCPSCHGTGKKIDKPCKSCHGDGRVEKTKNLSVTIPAGVDTGNQLRLSGEGAAGENGAPAGDLYVVIHVKDHDIFVRDGSNLYCEVPISFTMAALGGEIEVPTLDGRVKLKIPAETQTGKLFRVRGKGVTSARGGYAGDLICKVIIETPVSLNEEQKELLRKLEESLEGKGQHRPKHEGFFKGVKNFFDNLSK.

In terms of domain architecture, J spans 5-70 (DYYEVLGLQK…EKRAMYDQYG (66 aa)). The CR-type zinc finger occupies 135 to 213 (GVKKDIRIRT…CHGDGRVEKT (79 aa)). Residues Cys-148, Cys-151, Cys-165, Cys-168, Cys-187, Cys-190, Cys-201, and Cys-204 each coordinate Zn(2+). CXXCXGXG motif repeat units follow at residues 148 to 155 (CDTCHGSG), 165 to 172 (CPHCHGSG), 187 to 194 (CPSCHGTG), and 201 to 208 (CKSCHGDG).

It belongs to the DnaJ family. Homodimer. The cofactor is Zn(2+).

It is found in the cytoplasm. Functionally, participates actively in the response to hyperosmotic and heat shock by preventing the aggregation of stress-denatured proteins and by disaggregating proteins, also in an autonomous, DnaK-independent fashion. Unfolded proteins bind initially to DnaJ; upon interaction with the DnaJ-bound protein, DnaK hydrolyzes its bound ATP, resulting in the formation of a stable complex. GrpE releases ADP from DnaK; ATP binding to DnaK triggers the release of the substrate protein, thus completing the reaction cycle. Several rounds of ATP-dependent interactions between DnaJ, DnaK and GrpE are required for fully efficient folding. Also involved, together with DnaK and GrpE, in the DNA replication of plasmids through activation of initiation proteins. This Glaesserella parasuis serovar 5 (strain SH0165) (Haemophilus parasuis) protein is Chaperone protein DnaJ.